A 184-amino-acid polypeptide reads, in one-letter code: NADH-quinone oxidoreductase subunit B (184 aa).

4 residues coordinate [4Fe-4S] cluster: C37, C38, C103, and C132.

Belongs to the complex I 20 kDa subunit family. As to quaternary structure, NDH-1 is composed of 14 different subunits. Subunits NuoB, C, D, E, F, and G constitute the peripheral sector of the complex. [4Fe-4S] cluster is required as a cofactor.

The protein resides in the cell membrane. The enzyme catalyses a quinone + NADH + 5 H(+)(in) = a quinol + NAD(+) + 4 H(+)(out). In terms of biological role, NDH-1 shuttles electrons from NADH, via FMN and iron-sulfur (Fe-S) centers, to quinones in the respiratory chain. The immediate electron acceptor for the enzyme in this species is believed to be a menaquinone. Couples the redox reaction to proton translocation (for every two electrons transferred, four hydrogen ions are translocated across the cytoplasmic membrane), and thus conserves the redox energy in a proton gradient. The protein is NADH-quinone oxidoreductase subunit B of Rhodococcus opacus (strain B4).